Here is a 264-residue protein sequence, read N- to C-terminus: Thiazole synthase (264 aa).

Lys-106 acts as the Schiff-base intermediate with DXP in catalysis. 1-deoxy-D-xylulose 5-phosphate is bound by residues Gly-167, 193-194 (AG), and 215-216 (NS).

This sequence belongs to the ThiG family. As to quaternary structure, homotetramer. Forms heterodimers with either ThiH or ThiS.

It is found in the cytoplasm. It carries out the reaction [ThiS sulfur-carrier protein]-C-terminal-Gly-aminoethanethioate + 2-iminoacetate + 1-deoxy-D-xylulose 5-phosphate = [ThiS sulfur-carrier protein]-C-terminal Gly-Gly + 2-[(2R,5Z)-2-carboxy-4-methylthiazol-5(2H)-ylidene]ethyl phosphate + 2 H2O + H(+). It participates in cofactor biosynthesis; thiamine diphosphate biosynthesis. Catalyzes the rearrangement of 1-deoxy-D-xylulose 5-phosphate (DXP) to produce the thiazole phosphate moiety of thiamine. Sulfur is provided by the thiocarboxylate moiety of the carrier protein ThiS. In vitro, sulfur can be provided by H(2)S. This Stutzerimonas stutzeri (strain A1501) (Pseudomonas stutzeri) protein is Thiazole synthase.